Here is a 285-residue protein sequence, read N- to C-terminus: MRVIIVSGRSGSGKSTALNVLEDNGFFCIDNLPAVLLPELAERALLHTELLEPQVAVSIDARNLPSQLKRFPELLAEVRTRYILCDLLYLDADDKTLLKRFSETRRRHPLTNENRSLAEAIRDEGRLLTPIKDLADLKIDTTHLNLYQLRDTLKLRLLNKPEPGTAFLIESFGFKKGMPVDADLVFDVRCLPNPYWKPDLRDFSGLDQPVADYLAVQPDVEEMYQDILTYLQKWLPRFAASNRAYVTIAIGCTGGHHRSVYLADRLGQALKQSLKNVQVRHRDLC.

8–15 provides a ligand contact to ATP; that stretch reads GRSGSGKS. 60 to 63 is a binding site for GTP; sequence DARN.

It belongs to the RapZ-like family.

Functionally, displays ATPase and GTPase activities. This is Nucleotide-binding protein Avin_12760 from Azotobacter vinelandii (strain DJ / ATCC BAA-1303).